Here is a 445-residue protein sequence, read N- to C-terminus: C4-dicarboxylate transport protein (445 aa).

8 helical membrane passes run 17–37 (FYQILYVQVLVAIVIGVLLGY), 56–76 (LVKMIIAPVIFLTVTTGIAAM), 91–111 (VYFLVFSTLALIIGMVVSHIV), 157–177 (FVGGDILQVLFVAVLFGLSLA), 200–220 (LVAILMKAAPIGAFGAMAFTI), 233–253 (MLVGTFYATSVLFVVVVLGMV), 319–339 (IYMTMAALFIAQACDIPLSLG), and 367–387 (AATLSVVPTVPVAGMALILGV).

It belongs to the dicarboxylate/amino acid:cation symporter (DAACS) (TC 2.A.23) family.

Its subcellular location is the cell inner membrane. Responsible for the transport of dicarboxylates such as succinate, fumarate, and malate from the periplasm across the membrane. The polypeptide is C4-dicarboxylate transport protein (Bordetella avium (strain 197N)).